The following is a 309-amino-acid chain: tRNA uridine(34) hydroxylase (309 aa).

The 96-residue stretch at 137-232 folds into the Rhodanese domain; the sequence is RGDEVVFFDG…YGEKYGDKGL (96 aa). Catalysis depends on Cys192, which acts as the Cysteine persulfide intermediate.

It belongs to the TrhO family.

The enzyme catalyses uridine(34) in tRNA + AH2 + O2 = 5-hydroxyuridine(34) in tRNA + A + H2O. Catalyzes oxygen-dependent 5-hydroxyuridine (ho5U) modification at position 34 in tRNAs. This chain is tRNA uridine(34) hydroxylase, found in Corynebacterium jeikeium (strain K411).